Consider the following 385-residue polypeptide: MNIHEYQAKEILSAYGIPVPRGRVALTSDQVERAAKEMGGRCVIKAQIYAGGRGKAGGVKLVHHPEQAQDYGKELFGRRLITPQTGPEGLKVRRILVEEAVEIAREFYLSITLDRSTSRYCLIASAEGGVDIEEVVQKSPDKIHVLTIDPYTGLRPFQARRIALALGLSGTLCEDCVELMLNLYKVVLEKDCSLVEINPLVVTRAGWLMAMDAKINFDDNAIFRHREYPDMMDYSQLDTLEINAGKYDLSYIKLSGNIGCMVNGAGLAMATLDVLKEFGGEPANFLDVGGGATREKVAEAFKIILEDADVKGVFVNIFGGIMRCDVIAQGIIEAASEVHCTLPIVVRMDGSKVAEGKQLLVESGLNVQTADSLGEGAERIVGMLG.

The 235-residue stretch at 9 to 243 (KEILSAYGIP…YSQLDTLEIN (235 aa)) folds into the ATP-grasp domain. Residues Lys-45, 52–54 (GRG), Glu-98, Val-101, and Glu-106 contribute to the ATP site. Mg(2+) is bound by residues Asn-198 and Asp-212. Residues Asn-263 and 320–322 (GIM) contribute to the substrate site.

Belongs to the succinate/malate CoA ligase beta subunit family. In terms of assembly, heterotetramer of two alpha and two beta subunits. Requires Mg(2+) as cofactor.

The catalysed reaction is succinate + ATP + CoA = succinyl-CoA + ADP + phosphate. The enzyme catalyses GTP + succinate + CoA = succinyl-CoA + GDP + phosphate. The protein operates within carbohydrate metabolism; tricarboxylic acid cycle; succinate from succinyl-CoA (ligase route): step 1/1. In terms of biological role, succinyl-CoA synthetase functions in the citric acid cycle (TCA), coupling the hydrolysis of succinyl-CoA to the synthesis of either ATP or GTP and thus represents the only step of substrate-level phosphorylation in the TCA. The beta subunit provides nucleotide specificity of the enzyme and binds the substrate succinate, while the binding sites for coenzyme A and phosphate are found in the alpha subunit. This Geobacter sulfurreducens (strain ATCC 51573 / DSM 12127 / PCA) protein is Succinate--CoA ligase [ADP-forming] subunit beta.